A 232-amino-acid polypeptide reads, in one-letter code: Ovalbumin-related protein X (232 aa).

The protein belongs to the serpin family. Ov-serpin subfamily. As to expression, expressed in egg white (at protein level).

This chain is Ovalbumin-related protein X (SERPINB14C), found in Gallus gallus (Chicken).